The chain runs to 212 residues: Fibrillarin-like rRNA/tRNA 2'-O-methyltransferase (212 aa).

Residues 1 to 37 (MSEPNLPAGVERREIGGETRLATRGPPVYGEPTADGW) form a disordered region. S-adenosyl-L-methionine-binding positions include 74-75 (TT), 90-91 (EF), 115-116 (DA), and 136-139 (DVAT).

The protein belongs to the methyltransferase superfamily. Fibrillarin family. As to quaternary structure, interacts with nop5. Component of box C/D small ribonucleoprotein (sRNP) particles that contain rpl7ae, FlpA and nop5, plus a guide RNA.

Its function is as follows. Involved in pre-rRNA and tRNA processing. Utilizes the methyl donor S-adenosyl-L-methionine to catalyze the site-specific 2'-hydroxyl methylation of ribose moieties in rRNA and tRNA. Site specificity is provided by a guide RNA that base pairs with the substrate. Methylation occurs at a characteristic distance from the sequence involved in base pairing with the guide RNA. The sequence is that of Fibrillarin-like rRNA/tRNA 2'-O-methyltransferase from Halorubrum lacusprofundi (strain ATCC 49239 / DSM 5036 / JCM 8891 / ACAM 34).